The primary structure comprises 196 residues: Protease (196 aa).

Catalysis depends on residues His54, Asp70, and Cys121.

The protein belongs to the peptidase C5 family. As to quaternary structure, interacts with protease cofactor pVI-C; this interaction is necessary for protease activation.

The protein resides in the virion. It is found in the host nucleus. The enzyme catalyses Cleaves proteins of the adenovirus and its host cell at two consensus sites: -Yaa-Xaa-Gly-Gly-|-Xaa- and -Yaa-Xaa-Gly-Xaa-|-Gly- (in which Yaa is Met, Ile or Leu, and Xaa is any amino acid).. With respect to regulation, requires DNA and protease cofactor for maximal activation. Inside nascent virions, becomes partially activated by binding to the viral DNA, allowing it to cleave the cofactor that binds to the protease and fully activates it. Actin, like the viral protease cofactor, seems to act as a cofactor in the cleavage of cytokeratin 18 and of actin itself. Cleaves viral precursor proteins (pTP, pIIIa, pVI, pVII, pVIII, and pX) inside newly assembled particles giving rise to mature virions. Protease complexed to its cofactor slides along the viral DNA to specifically locate and cleave the viral precursors. Mature virions have a weakened organization compared to the unmature virions, thereby facilitating subsequent uncoating. Without maturation, the particle lacks infectivity and is unable to uncoat. Late in adenovirus infection, in the cytoplasm, may participate in the cytoskeleton destruction. Cleaves host cell cytoskeletal keratins K7 and K18. In Bos taurus (Bovine), this protein is Protease.